A 173-amino-acid polypeptide reads, in one-letter code: MPRSNRNDNFIDKSFTVMADLIVKLLPINARAKEAYVYYRDGLSAQNDGDYAEALENYEESLKLEENAIDRGETLKNIAIIYMSNGEEERALETYQKALDENPKQPSCLKNMGLIYEKRGRTAEEEGRRDDADGWFDQAANVWTQAVRLNPGGYLDIENWLKSTGRSNVDVYF.

TPR repeat units lie at residues 35–68, 72–105, and 120–153; these read AYVYYRDGLSAQNDGDYAEALENYEESLKLEENA, GETLKNIAIIYMSNGEEERALETYQKALDENPKQ, and GRTAEEEGRRDDADGWFDQAANVWTQAVRLNPGG.

This sequence belongs to the Ycf3 family.

It is found in the cellular thylakoid membrane. Functionally, essential for the assembly of the photosystem I (PSI) complex. May act as a chaperone-like factor to guide the assembly of the PSI subunits. The sequence is that of Photosystem I assembly protein Ycf3 from Synechococcus sp. (strain CC9311).